The primary structure comprises 333 residues: DNA-directed RNA polymerase subunit alpha (333 aa).

Residues 1–234 (MQSSVNEFLT…QQLAAFVDLK (234 aa)) are alpha N-terminal domain (alpha-NTD). Residues 248 to 333 (IDPILLRPVD…SLKKDDKATA (86 aa)) are alpha C-terminal domain (alpha-CTD).

It belongs to the RNA polymerase alpha chain family. As to quaternary structure, homodimer. The RNAP catalytic core consists of 2 alpha, 1 beta, 1 beta' and 1 omega subunit. When a sigma factor is associated with the core the holoenzyme is formed, which can initiate transcription.

The catalysed reaction is RNA(n) + a ribonucleoside 5'-triphosphate = RNA(n+1) + diphosphate. DNA-dependent RNA polymerase catalyzes the transcription of DNA into RNA using the four ribonucleoside triphosphates as substrates. In Pseudomonas putida (Arthrobacter siderocapsulatus), this protein is DNA-directed RNA polymerase subunit alpha.